The chain runs to 363 residues: UDP-3-O-acylglucosamine N-acyltransferase (363 aa).

H237 functions as the Proton acceptor in the catalytic mechanism. A disordered region spans residues 338 to 363 (EQNSTDRAPNAKMLEVGVDPETTCSS).

This sequence belongs to the transferase hexapeptide repeat family. LpxD subfamily. Homotrimer.

The enzyme catalyses a UDP-3-O-[(3R)-3-hydroxyacyl]-alpha-D-glucosamine + a (3R)-hydroxyacyl-[ACP] = a UDP-2-N,3-O-bis[(3R)-3-hydroxyacyl]-alpha-D-glucosamine + holo-[ACP] + H(+). It functions in the pathway bacterial outer membrane biogenesis; LPS lipid A biosynthesis. Its function is as follows. Catalyzes the N-acylation of UDP-3-O-acylglucosamine using 3-hydroxyacyl-ACP as the acyl donor. Is involved in the biosynthesis of lipid A, a phosphorylated glycolipid that anchors the lipopolysaccharide to the outer membrane of the cell. This Synechococcus sp. (strain JA-2-3B'a(2-13)) (Cyanobacteria bacterium Yellowstone B-Prime) protein is UDP-3-O-acylglucosamine N-acyltransferase.